Consider the following 310-residue polypeptide: Malate dehydrogenase (310 aa).

Residues 7 to 12 (GAGNVG) and Asp32 contribute to the NAD(+) site. The substrate site is built by Arg81 and Arg87. NAD(+)-binding positions include Asn94 and 117–119 (VSN). 2 residues coordinate substrate: Asn119 and Arg150. His174 (proton acceptor) is an active-site residue.

The protein belongs to the LDH/MDH superfamily. MDH type 3 family. In terms of assembly, homotetramer; arranged as a dimer of dimers.

It carries out the reaction (S)-malate + NAD(+) = oxaloacetate + NADH + H(+). In terms of biological role, catalyzes the reversible oxidation of malate to oxaloacetate. In Prosthecochloris vibrioformis (Chlorobium vibrioforme), this protein is Malate dehydrogenase.